Consider the following 131-residue polypeptide: Small ribosomal subunit protein uS11 (131 aa).

It belongs to the universal ribosomal protein uS11 family. As to quaternary structure, part of the 30S ribosomal subunit. Interacts with proteins S7 and S18. Binds to IF-3.

Located on the platform of the 30S subunit, it bridges several disparate RNA helices of the 16S rRNA. Forms part of the Shine-Dalgarno cleft in the 70S ribosome. The chain is Small ribosomal subunit protein uS11 from Endomicrobium trichonymphae.